Consider the following 325-residue polypeptide: Elongation factor P--(R)-beta-lysine ligase (325 aa).

76–78 lines the substrate pocket; sequence SPE. Residues 100–102 and Asn109 each bind ATP; that span reads RNE. Residue Tyr118 participates in substrate binding. 244–245 serves as a coordination point for ATP; sequence EL. Residue Glu251 participates in substrate binding. Gly300 provides a ligand contact to ATP.

Belongs to the class-II aminoacyl-tRNA synthetase family. EpmA subfamily. Homodimer.

The enzyme catalyses D-beta-lysine + L-lysyl-[protein] + ATP = N(6)-((3R)-3,6-diaminohexanoyl)-L-lysyl-[protein] + AMP + diphosphate + H(+). Functionally, with EpmB is involved in the beta-lysylation step of the post-translational modification of translation elongation factor P (EF-P) on 'Lys-34'. Catalyzes the ATP-dependent activation of (R)-beta-lysine produced by EpmB, forming a lysyl-adenylate, from which the beta-lysyl moiety is then transferred to the epsilon-amino group of EF-P 'Lys-34'. The polypeptide is Elongation factor P--(R)-beta-lysine ligase (Escherichia fergusonii (strain ATCC 35469 / DSM 13698 / CCUG 18766 / IAM 14443 / JCM 21226 / LMG 7866 / NBRC 102419 / NCTC 12128 / CDC 0568-73)).